Consider the following 460-residue polypeptide: MQKRELGKSGGNSGGSSGPPAKRGRPFGSTSANSAAAAAAAAAADAMSPSALLGPSLLVHNSFVEQNNRRIVLALQSGLKSEVTWALNTLTLLSFKEKEDIRRDVMPLAKIAGLLDALLLIIDDWRDIALPKDLTRGTRVRTLGTNASVTGFGNEYDALASIQPPGSGIGSSAAEALGKKSTGKHQSSQWWMEEDGLFNLDDEGRSEKQMCAIAASNVIRNFSFMPDNEVVMAQHRHCLETVFQCIHDHMTEDEELVTNSLETIVNLAHLMDLRIFSSLKQSYININEKKAVQAVVGILNSSVKAWNCAAAELLGRLIINPDNEPFISPLIPQIHKRLIDLLSIQAVDAQAAAVGALYNLVEVNMDCRLKLASERWAVDRLLKVIKTPHPVPEVCRKAAMILENLVSEPQNRGLLLAYENAFAELLFQEGKYSDSFARILYELTARSNSRVASARGIWGM.

A disordered region spans residues 1–30 (MQKRELGKSGGNSGGSSGPPAKRGRPFGST). A compositionally biased stretch (gly residues) spans 8-17 (KSGGNSGGSS). 3 ARM repeats span residues 227 to 269 (DNEV…NLAH), 323 to 362 (NEPFISPLIPQIHKRLIDLLSIQAVDAQAAAVGALYNLVE), and 366 to 407 (DCRL…NLVS).

In terms of assembly, interacts with AS2. In terms of tissue distribution, expressed in roots, leaves, stems and flowers.

The protein localises to the nucleus. Functionally, involved in leaf and flower development. Plays roles in leaf development partly by associating with AS2 and repressing KNAT1/BP transcription. Required for the formation of anther cell layers and normal expression of genes that regulates anther development. The sequence is that of Armadillo repeat-containing protein LFR from Arabidopsis thaliana (Mouse-ear cress).